The chain runs to 298 residues: GTP cyclohydrolase FolE2 (298 aa).

This sequence belongs to the GTP cyclohydrolase IV family.

The enzyme catalyses GTP + H2O = 7,8-dihydroneopterin 3'-triphosphate + formate + H(+). It functions in the pathway cofactor biosynthesis; 7,8-dihydroneopterin triphosphate biosynthesis; 7,8-dihydroneopterin triphosphate from GTP: step 1/1. Functionally, converts GTP to 7,8-dihydroneopterin triphosphate. This chain is GTP cyclohydrolase FolE2, found in Xylella fastidiosa (strain 9a5c).